The chain runs to 493 residues: Protein kinase PINOID 2 (493 aa).

The segment at 1–53 is disordered; the sequence is MAAIKEESDYDSSRSSLTAPDSRRSWISDIGSSSSVSARSFGGDTPASSCRYK. Residues 27–44 are compositionally biased toward low complexity; it reads ISDIGSSSSVSARSFGGD. Residues 80-443 form the Protein kinase domain; it reads FRLVRRLGSG…SAEVKRHPFF (364 aa). Residues 86–94 and K120 contribute to the ATP site; that span reads LGSGDLGNV. Catalysis depends on D216, which acts as the Proton acceptor. Residues 295–306 are compositionally biased toward gly residues; the sequence is GGGAAAGNNGDG. Disordered stretches follow at residues 295–320 and 458–493; these read GGGAAAGNNGDGDGNDEEAETETAEP and EVPAPPAPAPKKVMTMSKKERQEPYNYRPENHFDYF. Residues 307–319 are compositionally biased toward acidic residues; the sequence is DGNDEEAETETAE. The AGC-kinase C-terminal domain occupies 444–493; the sequence is KGVNWALVRSVRPPEVPAPPAPAPKKVMTMSKKERQEPYNYRPENHFDYF. Residues 474 to 493 are compositionally biased toward basic and acidic residues; that stretch reads SKKERQEPYNYRPENHFDYF.

It belongs to the protein kinase superfamily. Ser/Thr protein kinase family.

The catalysed reaction is L-seryl-[protein] + ATP = O-phospho-L-seryl-[protein] + ADP + H(+). It catalyses the reaction L-threonyl-[protein] + ATP = O-phospho-L-threonyl-[protein] + ADP + H(+). Its function is as follows. Serine/threonine-protein kinase involved in the regulation of auxin signaling. This Oryza sativa subsp. japonica (Rice) protein is Protein kinase PINOID 2 (PID2).